We begin with the raw amino-acid sequence, 611 residues long: Translation initiation factor RLI1 (611 aa).

2 4Fe-4S ferredoxin-type domains span residues 7–31 and 46–75; these read RVAIVNSDKCKPKKCRQECKKSCPV and RIAFISEQLCIGCGICPKRCPFGAITIINL. ABC transporter domains are found at residues 77–318 and 345–565; these read TNLE…FLDG and AEKS…LKNL. ATP is bound by residues 110–117 and 382–389; these read GTNGIGKS and GENGTGKT.

This sequence belongs to the ABC transporter superfamily. ABCE family. In terms of assembly, component of the multifactor complex (MFC). The complex associates with pre-initiation complexes.

Its subcellular location is the cytoplasm. It localises to the nucleus. Component of the multifactor complex (MFC) involved in translation initiation. Required for the binding of MFC to the 40S ribosome. Required for the processing and nuclear export of the 60S and 40S ribosomal subunits. In Chaetomium thermophilum (strain DSM 1495 / CBS 144.50 / IMI 039719) (Thermochaetoides thermophila), this protein is Translation initiation factor RLI1 (RLI1).